The following is a 57-amino-acid chain: Small ribosomal subunit protein eS27 (57 aa).

Positions 10, 13, 29, and 32 each coordinate Zn(2+). The segment at 10–32 (CDDCENEQVLFGKAANTVNCAVC) adopts a C4-type zinc-finger fold.

Belongs to the eukaryotic ribosomal protein eS27 family. As to quaternary structure, part of the 30S ribosomal subunit. Requires Zn(2+) as cofactor.

In Natronomonas pharaonis (strain ATCC 35678 / DSM 2160 / CIP 103997 / JCM 8858 / NBRC 14720 / NCIMB 2260 / Gabara) (Halobacterium pharaonis), this protein is Small ribosomal subunit protein eS27.